We begin with the raw amino-acid sequence, 359 residues long: UPF0283 membrane protein RL2646 (359 aa).

The tract at residues 1–48 is disordered; it reads MSKPPSDPPRRAPAAFIYEDEATERRDNGRQGGERRKPESFSEHIVVT. Residues 23 to 42 show a composition bias toward basic and acidic residues; the sequence is TERRDNGRQGGERRKPESFS. Helical transmembrane passes span 77–97 and 111–131; these read FGKIAAGAFGILLSLAIGLWT and LGYAALAVLAVGILAVLALVI.

It belongs to the UPF0283 family.

It is found in the cell inner membrane. The chain is UPF0283 membrane protein RL2646 from Rhizobium johnstonii (strain DSM 114642 / LMG 32736 / 3841) (Rhizobium leguminosarum bv. viciae).